Reading from the N-terminus, the 438-residue chain is sn-glycerol-3-phosphate-binding periplasmic protein UgpB (438 aa).

The N-terminal stretch at 1–23 is a signal peptide; sequence MKPLHYTASALALGLALMGNAQA. Sn-glycerol 3-phosphate is bound by residues Tyr65, Glu89, Ser144, Ser270, Gly307, Tyr346, and Arg397.

This sequence belongs to the bacterial solute-binding protein 1 family. In terms of assembly, the complex is composed of two ATP-binding proteins (UgpC), two transmembrane proteins (UgpA and UgpE) and a solute-binding protein (UgpB).

The protein resides in the periplasm. In terms of biological role, part of the ABC transporter complex UgpBAEC involved in sn-glycerol-3-phosphate (G3P) import. Binds G3P. This is sn-glycerol-3-phosphate-binding periplasmic protein UgpB (ugpB) from Escherichia coli O157:H7.